A 57-amino-acid polypeptide reads, in one-letter code: uncharacterized protein (57 aa).

The helical transmembrane segment at 3-23 threads the bilayer; the sequence is PLTLLIIIGGVILGNELIISL. Residues 38–57 form a disordered region; the sequence is KHKHKTQENYETFASDKKRT.

It localises to the host membrane. This is an uncharacterized protein from Acidianus bottle-shaped virus (isolate Italy/Pozzuoli) (ABV).